A 185-amino-acid chain; its full sequence is Probable chorismate pyruvate-lyase (185 aa).

Substrate is bound by residues Arg-75, Leu-113, and Glu-174.

The protein belongs to the UbiC family.

It is found in the cytoplasm. It catalyses the reaction chorismate = 4-hydroxybenzoate + pyruvate. Its pathway is cofactor biosynthesis; ubiquinone biosynthesis. In terms of biological role, removes the pyruvyl group from chorismate, with concomitant aromatization of the ring, to provide 4-hydroxybenzoate (4HB) for the ubiquinone pathway. The protein is Probable chorismate pyruvate-lyase of Aromatoleum aromaticum (strain DSM 19018 / LMG 30748 / EbN1) (Azoarcus sp. (strain EbN1)).